The sequence spans 373 residues: Phosphoserine aminotransferase (373 aa).

Residue R46 coordinates L-glutamate. 4 residues coordinate pyridoxal 5'-phosphate: F104, T150, D172, and Q195. At K196 the chain carries N6-(pyridoxal phosphate)lysine. 247-248 (NT) contributes to the pyridoxal 5'-phosphate binding site.

Belongs to the class-V pyridoxal-phosphate-dependent aminotransferase family. SerC subfamily. Homodimer. Pyridoxal 5'-phosphate is required as a cofactor.

It is found in the cytoplasm. It carries out the reaction O-phospho-L-serine + 2-oxoglutarate = 3-phosphooxypyruvate + L-glutamate. The catalysed reaction is 4-(phosphooxy)-L-threonine + 2-oxoglutarate = (R)-3-hydroxy-2-oxo-4-phosphooxybutanoate + L-glutamate. Its pathway is amino-acid biosynthesis; L-serine biosynthesis; L-serine from 3-phospho-D-glycerate: step 2/3. It participates in cofactor biosynthesis; pyridoxine 5'-phosphate biosynthesis; pyridoxine 5'-phosphate from D-erythrose 4-phosphate: step 3/5. Its function is as follows. Catalyzes the reversible conversion of 3-phosphohydroxypyruvate to phosphoserine and of 3-hydroxy-2-oxo-4-phosphonooxybutanoate to phosphohydroxythreonine. The chain is Phosphoserine aminotransferase from Rhodococcus opacus (strain B4).